The sequence spans 326 residues: Glycerol-3-phosphate dehydrogenase [NAD(P)+] (326 aa).

Trp16, Arg36, Arg37, and Lys106 together coordinate NADPH. Positions 106 and 132 each coordinate sn-glycerol 3-phosphate. Ala136 provides a ligand contact to NADPH. Sn-glycerol 3-phosphate-binding residues include Lys187, Asp240, Ser250, Arg251, and Asn252. The Proton acceptor role is filled by Lys187. An NADPH-binding site is contributed by Arg251. 2 residues coordinate NADPH: Val271 and Glu273.

The protein belongs to the NAD-dependent glycerol-3-phosphate dehydrogenase family.

It is found in the cytoplasm. It carries out the reaction sn-glycerol 3-phosphate + NAD(+) = dihydroxyacetone phosphate + NADH + H(+). The enzyme catalyses sn-glycerol 3-phosphate + NADP(+) = dihydroxyacetone phosphate + NADPH + H(+). It functions in the pathway membrane lipid metabolism; glycerophospholipid metabolism. In terms of biological role, catalyzes the reduction of the glycolytic intermediate dihydroxyacetone phosphate (DHAP) to sn-glycerol 3-phosphate (G3P), the key precursor for phospholipid synthesis. The polypeptide is Glycerol-3-phosphate dehydrogenase [NAD(P)+] (Deinococcus geothermalis (strain DSM 11300 / CIP 105573 / AG-3a)).